The sequence spans 78 residues: uncharacterized protein (78 aa).

Positions Gly51–Asn78 are disordered.

This is an uncharacterized protein from Dictyostelium discoideum (Social amoeba).